We begin with the raw amino-acid sequence, 340 residues long: Ketol-acid reductoisomerase (NADP(+)) (340 aa).

The region spanning 3–183 (INVFYDKDCN…GGGRTGIIET (181 aa)) is the KARI N-terminal Rossmann domain. NADP(+) contacts are provided by residues 26–29 (FGSQ), R49, S54, and 84–87 (DENQ). Residue H109 is part of the active site. NADP(+) is bound at residue G135. The KARI C-terminal knotted domain maps to 184 to 329 (TFKDETETDL…VKLRNMMPWI (146 aa)). Mg(2+) contacts are provided by D192, E196, E228, and E232. S253 contributes to the substrate binding site.

It belongs to the ketol-acid reductoisomerase family. The cofactor is Mg(2+).

The enzyme catalyses (2R)-2,3-dihydroxy-3-methylbutanoate + NADP(+) = (2S)-2-acetolactate + NADPH + H(+). It catalyses the reaction (2R,3R)-2,3-dihydroxy-3-methylpentanoate + NADP(+) = (S)-2-ethyl-2-hydroxy-3-oxobutanoate + NADPH + H(+). It functions in the pathway amino-acid biosynthesis; L-isoleucine biosynthesis; L-isoleucine from 2-oxobutanoate: step 2/4. Its pathway is amino-acid biosynthesis; L-valine biosynthesis; L-valine from pyruvate: step 2/4. In terms of biological role, involved in the biosynthesis of branched-chain amino acids (BCAA). Catalyzes an alkyl-migration followed by a ketol-acid reduction of (S)-2-acetolactate (S2AL) to yield (R)-2,3-dihydroxy-isovalerate. In the isomerase reaction, S2AL is rearranged via a Mg-dependent methyl migration to produce 3-hydroxy-3-methyl-2-ketobutyrate (HMKB). In the reductase reaction, this 2-ketoacid undergoes a metal-dependent reduction by NADPH to yield (R)-2,3-dihydroxy-isovalerate. The sequence is that of Ketol-acid reductoisomerase (NADP(+)) from Aliarcobacter butzleri (strain RM4018) (Arcobacter butzleri).